The primary structure comprises 187 residues: Phospholipase A2-gamma (187 aa).

The first 25 residues, 1 to 25 (MITGLALSRVAFGLTAFLLLAVVSS), serve as a signal peptide directing secretion. Cystine bridges form between C29/C56, C33/C62, C38/C115, C49/C69, C68/C93, and C75/C86. The Ca(2+) site is built by Y48, G50, and Y53. H72 is a catalytic residue. D73 serves as a coordination point for Ca(2+).

This sequence belongs to the phospholipase A2 family. Ca(2+) is required as a cofactor. Strongly expressed in mature flowers but weakly expressed in other tissues. Detected in buds, open flowers and in pollen.

It is found in the secreted. Its subcellular location is the golgi apparatus. It localises to the trans-Golgi network. The protein localises to the endoplasmic reticulum. It catalyses the reaction a 1,2-diacyl-sn-glycero-3-phosphocholine + H2O = a 1-acyl-sn-glycero-3-phosphocholine + a fatty acid + H(+). PA2 catalyzes the calcium-dependent hydrolysis of the 2-acyl groups in 3-sn-phosphoglycerides. Releases lysophospholipids (LPLs) and free fatty acids (FFAs) from membrane phospholipids in response to hormones and other external stimuli. Plays a role in pollen development and germination and tube growth. The sequence is that of Phospholipase A2-gamma (PLA2-GAMMA) from Arabidopsis thaliana (Mouse-ear cress).